Reading from the N-terminus, the 1043-residue chain is Phosphatidylinositol 4,5-bisphosphate 3-kinase catalytic subunit delta isoform (1043 aa).

Residues 16 to 105 (ESQSVVVDFL…LPVLRLVARE (90 aa)) form the PI3K-ABD domain. Residues 187–278 (NRALLVNVKF…GLTPHLTMVH (92 aa)) enclose the PI3K-RBD domain. The interval 287–312 (DEQSNPAPQVQKPRAKPPPIPAKKPS) is disordered. The 158-residue stretch at 319 to 476 (LEQPFSIELI…SAAALVIYLP (158 aa)) folds into the C2 PI3K-type domain. Positions 496-673 (RHGERGRITE…GLIMEAYCRG (178 aa)) constitute a PIK helical domain. Tyrosine 523 carries the post-translational modification Phosphotyrosine. In terms of domain architecture, PI3K/PI4K catalytic spans 744 to 1026 (CVEQCTFMDS…KFNEALRESW (283 aa)). Positions 750 to 756 (FMDSKMK) are G-loop. Residues 889–897 (GIGDRHSDN) form a catalytic loop region. An activation loop region spans residues 908 to 934 (HIDFGHFLGNFKTKFGINRERVPFILT). Serine 1038 is modified (phosphoserine; by autocatalysis).

The protein belongs to the PI3/PI4-kinase family. As to quaternary structure, heterodimer of a catalytic subunit PIK3CD and a p85 regulatory subunit (PIK3R1, PIK3R2 or PIK3R3). Interacts with ERAS and HRAS. Post-translationally, autophosphorylation on Ser-1038 results in the almost complete inactivation of the lipid kinase activity. In terms of tissue distribution, abundantly expressed in adult mouse spleen as well as in testis. Isoform 1 is expressed in spleen and lung (at protein level). Isoform 1 is expressed predominantly in leukocytes.

The protein localises to the cytoplasm. It carries out the reaction a 1,2-diacyl-sn-glycero-3-phospho-(1D-myo-inositol-4,5-bisphosphate) + ATP = a 1,2-diacyl-sn-glycero-3-phospho-(1D-myo-inositol-3,4,5-trisphosphate) + ADP + H(+). The enzyme catalyses a 1,2-diacyl-sn-glycero-3-phospho-(1D-myo-inositol) + ATP = a 1,2-diacyl-sn-glycero-3-phospho-(1D-myo-inositol-3-phosphate) + ADP + H(+). The catalysed reaction is 1-octadecanoyl-2-(5Z,8Z,11Z,14Z)-eicosatetraenoyl-sn-glycero-3-phospho-1D-myo-inositol 4,5-bisphosphate + ATP = 1-octadecanoyl-2-(5Z,8Z,11Z,14Z-eicosatetraenoyl)-sn-glycero-3-phospho-(1D-myo-inositol 3,4,5-triphosphate) + ADP + H(+). The protein operates within phospholipid metabolism; phosphatidylinositol phosphate biosynthesis. With respect to regulation, activated by growth factors and cytokine receptors through a tyrosine-kinase-dependent mechanism. Activated by RAS. IC87114 inhibits lipid kinase activity and is selective in cells at doses up to 5-10 uM. Among other effects, IC87114 reduces allergic responses, prevents the recruitment of antigen-specific T cells into target tissue, and affects natural killer cell chemotaxis. Functionally, phosphoinositide-3-kinase (PI3K) phosphorylates phosphatidylinositol (PI) and its phosphorylated derivatives at position 3 of the inositol ring to produce 3-phosphoinositides. Uses ATP and PtdIns(4,5)P2 (phosphatidylinositol 4,5-bisphosphate) to generate phosphatidylinositol 3,4,5-trisphosphate (PIP3). PIP3 plays a key role by recruiting PH domain-containing proteins to the membrane, including AKT1 and PDPK1, activating signaling cascades involved in cell growth, survival, proliferation, motility and morphology. Mediates immune responses. Plays a role in B-cell development, proliferation, migration, and function. Required for B-cell receptor (BCR) signaling. Mediates B-cell proliferation response to anti-IgM, anti-CD40 and IL4 stimulation. Promotes cytokine production in response to TLR4 and TLR9. Required for antibody class switch mediated by TLR9. Involved in the antigen presentation function of B-cells. Involved in B-cell chemotaxis in response to CXCL13 and sphingosine 1-phosphate (S1P). Required for proliferation, signaling and cytokine production of naive, effector and memory T-cells. Required for T-cell receptor (TCR) signaling. Mediates TCR signaling events at the immune synapse. Activation by TCR leads to antigen-dependent memory T-cell migration and retention to antigenic tissues. Together with PIK3CG participates in T-cell development. Contributes to T-helper cell expansion and differentiation. Required for T-cell migration mediated by homing receptors SELL/CD62L, CCR7 and S1PR1 and antigen dependent recruitment of T-cells. Together with PIK3CG is involved in natural killer (NK) cell development and migration towards the sites of inflammation. Participates in NK cell receptor activation. Plays a role in NK cell maturation and cytokine production. Together with PIK3CG is involved in neutrophil chemotaxis and extravasation. Together with PIK3CG participates in neutrophil respiratory burst. Plays important roles in mast-cell development and mast cell mediated allergic response. Involved in stem cell factor (SCF)-mediated proliferation, adhesion and migration. Required for allergen-IgE-induced degranulation and cytokine release. The lipid kinase activity is required for its biological function. In Mus musculus (Mouse), this protein is Phosphatidylinositol 4,5-bisphosphate 3-kinase catalytic subunit delta isoform (Pik3cd).